The sequence spans 89 residues: Pigment-dispersing hormone peptides (89 aa).

Positions 1–22 (MTAMAVSGKLLTALVLSTYILG) are cleaved as a signal peptide. Ala86 is subject to Alanine amide.

The protein belongs to the arthropod PDH family.

The protein resides in the secreted. In terms of biological role, capable of inducing pigment dispersion in the chromatophores of the fiddler crab Uca pugilator. The sequence is that of Pigment-dispersing hormone peptides from Romalea microptera (Eastern lubber grasshopper).